Consider the following 506-residue polypeptide: Dolabradiene monooxygenase (506 aa).

The helical transmembrane segment at 5–25 threads the bilayer; it reads VLLAVAMVALIAVLSKLKSLL. Heme is bound at residue Cys443.

This sequence belongs to the cytochrome P450 family. The cofactor is heme.

Its subcellular location is the membrane. The enzyme catalyses dolabradiene + reduced [NADPH--hemoprotein reductase] + O2 = 15,16-epoxydolabrene + oxidized [NADPH--hemoprotein reductase] + H2O + H(+). It carries out the reaction 15,16-epoxydolabrene + reduced [NADPH--hemoprotein reductase] + O2 = 3beta-hydroxy-15,16-epoxydolabrene + oxidized [NADPH--hemoprotein reductase] + H2O + H(+). Its function is as follows. Involved in the production of antifungal dolabralexin phytoalexins in response to biotic and abiotic stresses. Catalyzes the epoxidation of dolabradiene at C-16, followed by hydroxylation at C-3, to yield the epoxides 15,16-epoxydolabrene (epoxydolabrene) and 3b-hydroxy-15,16-epoxydolabrene (epoxydolabranol). The protein is Dolabradiene monooxygenase of Zea mays (Maize).